Here is a 484-residue protein sequence, read N- to C-terminus: Sperm motility kinase 2B (484 aa).

The Protein kinase domain maps to Y8 to V256. ATP contacts are provided by residues I14–V22 and K37. D127 (proton acceptor) is an active-site residue. In terms of domain architecture, UBA spans P272–K314. Polar residues-rich tracts occupy residues P356–S373 and S422–S434. Disordered stretches follow at residues P356–H400 and S422–K450.

This sequence belongs to the protein kinase superfamily. CAMK Ser/Thr protein kinase family. Smok subfamily. In terms of tissue distribution, testis-specific. Expressed in the testis from 22 days postpartum (22 dpp).

It carries out the reaction L-seryl-[protein] + ATP = O-phospho-L-seryl-[protein] + ADP + H(+). It catalyses the reaction L-threonyl-[protein] + ATP = O-phospho-L-threonyl-[protein] + ADP + H(+). Functionally, may play a role in sperm motility, especially in the regulation of flagellar function. In Mus musculus (Mouse), this protein is Sperm motility kinase 2B.